The primary structure comprises 244 residues: Securin-like protein (244 aa).

Positions 31–53 (ELEKTPSRGGLGLVVNSSKTPGG) are disordered.

Forms a complex (via C-terminus) with separase sep-1. Interaction with ify-1 stabilizes sep-1. Also maintains the complex in the cytoplasm during interphase and recruits it to chromosomes during the first meiotic division. Interacts with E3 ubiquitin-protein ligase etc-1. In terms of processing, ubiquitinated by etc-1 likely at the onset of anaphase, resulting in its degradation. As to expression, expressed in germ cells including oocytes.

It localises to the cytoplasm. Its subcellular location is the chromosome. The protein localises to the cytoskeleton. The protein resides in the spindle. Functionally, acts as a chaperone and as an inhibitor for separase sep-1. Plays an essential role in maintaining chromosome cohesion prior to meiotic and mitotic anaphase, in cytokinesis and in organizing the spindle and the centrosome. Ubiquitination-dependent degradation at the onset of anaphase is likely to activate sep-1 resulting in the proteolysis of the cohesin complex and the subsequent segregation of the chromosomes. Also required for cortical granule exocytosis. The chain is Securin-like protein from Caenorhabditis elegans.